The following is a 354-amino-acid chain: Uroporphyrinogen decarboxylase (354 aa).

Residues 27-31, Asp77, Tyr154, Thr209, and His327 each bind substrate; that span reads RQAGR.

It belongs to the uroporphyrinogen decarboxylase family. In terms of assembly, homodimer.

Its subcellular location is the cytoplasm. The enzyme catalyses uroporphyrinogen III + 4 H(+) = coproporphyrinogen III + 4 CO2. The protein operates within porphyrin-containing compound metabolism; protoporphyrin-IX biosynthesis; coproporphyrinogen-III from 5-aminolevulinate: step 4/4. In terms of biological role, catalyzes the decarboxylation of four acetate groups of uroporphyrinogen-III to yield coproporphyrinogen-III. The polypeptide is Uroporphyrinogen decarboxylase (Pectobacterium carotovorum subsp. carotovorum (strain PC1)).